The sequence spans 348 residues: Outer membrane protein assembly factor BamC (348 aa).

Residues 1 to 19 form the signal peptide; that stretch reads MKYSHQLVIGSLAVFVLTA. The N-palmitoyl cysteine moiety is linked to residue Cys20. A lipid anchor (S-diacylglycerol cysteine) is attached at Cys20.

The protein belongs to the BamC family. As to quaternary structure, part of the Bam complex.

The protein resides in the cell outer membrane. Functionally, part of the outer membrane protein assembly complex, which is involved in assembly and insertion of beta-barrel proteins into the outer membrane. The sequence is that of Outer membrane protein assembly factor BamC from Vibrio atlanticus (strain LGP32) (Vibrio splendidus (strain Mel32)).